Consider the following 780-residue polypeptide: Cation channel sperm-associated protein 1 (780 aa).

3 disordered regions span residues 1-37, 71-306, and 376-412; these read MDQN…PGHS, LSSH…QDHH, and QMSK…LQRT. The Cytoplasmic segment spans residues 1-447; that stretch reads MDQNSVPEKA…EMIRNLTQSL (447 aa). Over residues 110–122 the composition is skewed to basic and acidic residues; sequence SYGEDYHDELQRD. Residues 211–241 are compositionally biased toward basic residues; that stretch reads QVPHRGWPHHHQVHHHGRSRHHEAHQHGKSP. Positions 261-284 are enriched in basic and acidic residues; that stretch reads SDYHSEYHQGDHHPSEYHHGDHPH. Basic residues predominate over residues 285 to 299; sequence HTQHHYHQTHRHRDY. Residues 387-401 are compositionally biased toward basic and acidic residues; sequence STKHSEDWGKEEGQF. A compositionally biased stretch (basic residues) spans 402-412; that stretch reads QKRKTGRLQRT. The chain crosses the membrane as a helical span at residues 448–469; sequence AFETFIFFVVCLNTVMLVAQTF. Topologically, residues 470–478 are extracellular; it reads AEVEIRGEW. Residues 479–500 form a helical membrane-spanning segment; the sequence is YFMALDSIFFCIYVVEALLKII. Topologically, residues 501–508 are cytoplasmic; the sequence is ALGLSYFF. A helical membrane pass occupies residues 509–531; that stretch reads DFWNNLDFFIMAMAVLDFLLMQT. The Extracellular segment spans residues 532 to 540; it reads HSFAIYHQS. Residues 541–563 form a helical membrane-spanning segment; the sequence is LFRILKVFKSLRALRAIRVLRRL. The Cytoplasmic portion of the chain corresponds to 564-581; sequence SFLTSVQEVTGTLGQSLP. A helical transmembrane segment spans residues 582-604; that stretch reads SIAAILILMFTCLFLFSAVLRAL. Residues 605–615 are Extracellular-facing; that stretch reads FRKSDPKRFQN. The segment at residues 616–628 is an intramembrane region (helical; Pore-forming); the sequence is IFTTIFTLFTLLT. Residues 629 to 645 lie on the Extracellular side of the membrane; it reads LDDWSLIYMDSRAQGAW. A helical transmembrane segment spans residues 646-671; it reads YIIPILVIYIIIQYFIFLNLVITVLV. The Cytoplasmic segment spans residues 672-780; it reads DSFQTALFKG…FEAGEEDFRN (109 aa).

It belongs to the cation channel sperm-associated (TC 1.A.1.19) family. As to quaternary structure, component of the CatSper complex or CatSpermasome composed of the core pore-forming members CATSPER1, CATSPER2, CATSPER3 and CATSPER4 as well as auxiliary members CATSPERB, CATSPERG, CATSPERD, CATSPERE, CATSPERZ, C2CD6/CATSPERT, TMEM249, TMEM262 and EFCAB9. HSPA1 may be an additional auxiliary complex member. The core complex members CATSPER1, CATSPER2, CATSPER3 and CATSPER4 form a heterotetrameric channel. The auxiliary CATSPERB, CATSPERG, CATSPERD and CATSPERE subunits form a pavilion-like structure over the pore which stabilizes the complex through interactions with CATSPER4, CATSPER3, CATSPER1 and CATSPER2 respectively. TMEM262/CATSPERH interacts with CATSPERB, further stabilizing the complex. C2CD6/CATSPERT interacts at least with CATSPERD and is required for targeting the CatSper complex in the flagellar membrane. Interacts with Ca(v)3.3/CACNA1I, leading to suppression of T-type calcium channel activity. As to expression, testis-specific.

The protein localises to the cell projection. Its subcellular location is the cilium. It localises to the flagellum membrane. The enzyme catalyses Ca(2+)(in) = Ca(2+)(out). The CatSper calcium channel is indirectly activated by extracellular progesterone and prostaglandins following the sequence: progesterone &gt; PGF1-alpha = PGE1 &gt; PGA1 &gt; PGE2 &gt;&gt; PGD2. The CatSper calcium channel is directly inhibited by endocannabinoid 2-arachidonoylglycerol (2AG). Indirect activation by progesterone takes place via the following mechanism: progesterone binds and activates the acylglycerol lipase ABHD2, which in turn mediates hydrolysis of 2AG inhibitor, relieving inhibition of the CatSper channel. The primary effect of progesterone activation is to shift voltage dependence towards more physiological, negative membrane potentials; it is not mediated by metabotropic receptors and second messengers. Sperm capacitation enhances the effect of progesterone by providing additional negative shift. Also activated by the elevation of intracellular pH. In terms of biological role, pore-forming subunit of the CatSper complex, a sperm-specific voltage-gated calcium channel that plays a central role in calcium-dependent physiological responses essential for successful fertilization, such as sperm hyperactivation, acrosome reaction and chemotaxis towards the oocyte. In Homo sapiens (Human), this protein is Cation channel sperm-associated protein 1 (CATSPER1).